The chain runs to 340 residues: MGTIPTKIAIDAMGGDYAPSEIVEGAIKAQEAYGVKVLLAGDPQQIKASMNHRLSQPLPEIVPAEDIVEMHEEPLMAVRRKPKASINIAMKLVKDKQADAVVSAGNSGAAMASALLRLGRIPGIDRPAIGAVLPTMIPKKPVLILDVGANVDCRPKYLDQFAVMGTIYSESVLATDEPKVGLLNIGEEPSKGNDLAVRTYQILQENNQIKFIGNAEGRDVLSGKFDVIVCDGFAGNILLKFAEAVGDAVLQMMREELTPGLSGKIGTAILRPNLKNMKQRIDHVEHGGGLLLGVGGICIISHGSSKAQSISNAVRSAKEAVENRVLERINSKYLLEVENQ.

It belongs to the PlsX family. In terms of assembly, homodimer. Probably interacts with PlsY.

It localises to the cytoplasm. The catalysed reaction is a fatty acyl-[ACP] + phosphate = an acyl phosphate + holo-[ACP]. It participates in lipid metabolism; phospholipid metabolism. Catalyzes the reversible formation of acyl-phosphate (acyl-PO(4)) from acyl-[acyl-carrier-protein] (acyl-ACP). This enzyme utilizes acyl-ACP as fatty acyl donor, but not acyl-CoA. This is Phosphate acyltransferase from Trichodesmium erythraeum (strain IMS101).